The chain runs to 190 residues: MRAFKVTRDTNETKIHLELNIDGTGKYAITTGIAFFDHVLSSFAKHGAFDLKLDVLGDLEIDDHHTVEDVGIVLGKAFENMEKKNIKRFGWAIIPMDEAKASVSVDIGGRPYVVGDYTPSTEKIGNFSTENVVHFFESFSNNAKINLHFEVTGENEHHKVEALFKAFGVAMDMATQIDERKGIVSTKGVI.

Belongs to the imidazoleglycerol-phosphate dehydratase family.

It localises to the cytoplasm. It catalyses the reaction D-erythro-1-(imidazol-4-yl)glycerol 3-phosphate = 3-(imidazol-4-yl)-2-oxopropyl phosphate + H2O. The protein operates within amino-acid biosynthesis; L-histidine biosynthesis; L-histidine from 5-phospho-alpha-D-ribose 1-diphosphate: step 6/9. This is Imidazoleglycerol-phosphate dehydratase from Methanococcus maripaludis (strain C7 / ATCC BAA-1331).